The sequence spans 75 residues: Dermaseptin-A3 (75 aa).

The signal sequence occupies residues 1 to 22 (MAFLKKSLFLVLLLGLISLSIC). A propeptide spanning residues 23–43 (EEEKRENEVEEEQEDDEQSEL) is cleaved from the precursor. Q72 is subject to Glutamine amide. The propeptide occupies 74–75 (EQ).

It belongs to the frog skin active peptide (FSAP) family. Dermaseptin subfamily. As to expression, expressed by the skin glands.

Its subcellular location is the secreted. In terms of biological role, possesses a potent antimicrobial activity against Gram-positive and Gram-negative bacteria. Probably acts by disturbing membrane functions with its amphipathic structure. The protein is Dermaseptin-A3 of Agalychnis annae (Blue-sided leaf frog).